The chain runs to 202 residues: LexA repressor (202 aa).

The segment at residues 28 to 48 (RAEIAQQLGFRSPNAAEEHLK) is a DNA-binding region (H-T-H motif). Catalysis depends on for autocatalytic cleavage activity residues Ser119 and Lys156.

It belongs to the peptidase S24 family. Homodimer.

It catalyses the reaction Hydrolysis of Ala-|-Gly bond in repressor LexA.. In terms of biological role, represses a number of genes involved in the response to DNA damage (SOS response), including recA and lexA. In the presence of single-stranded DNA, RecA interacts with LexA causing an autocatalytic cleavage which disrupts the DNA-binding part of LexA, leading to derepression of the SOS regulon and eventually DNA repair. The sequence is that of LexA repressor from Pectobacterium atrosepticum (strain SCRI 1043 / ATCC BAA-672) (Erwinia carotovora subsp. atroseptica).